Consider the following 157-residue polypeptide: Transcription elongation factor GreA (157 aa).

The stretch at 47-75 (SGEYEDAKKAQALLEGRIRELKHLLSRAE) forms a coiled coil.

The protein belongs to the GreA/GreB family.

Functionally, necessary for efficient RNA polymerase transcription elongation past template-encoded arresting sites. The arresting sites in DNA have the property of trapping a certain fraction of elongating RNA polymerases that pass through, resulting in locked ternary complexes. Cleavage of the nascent transcript by cleavage factors such as GreA or GreB allows the resumption of elongation from the new 3'terminus. GreA releases sequences of 2 to 3 nucleotides. This chain is Transcription elongation factor GreA, found in Chloroflexus aggregans (strain MD-66 / DSM 9485).